Consider the following 60-residue polypeptide: Potassium channel toxin alpha-KTx 3.6 (60 aa).

Residues Met1–Gly22 form the signal peptide. Disulfide bonds link Cys29-Cys49, Cys35-Cys54, and Cys39-Cys56. Residue Lys59 is modified to Lysine amide.

The protein belongs to the short scorpion toxin superfamily. Potassium channel inhibitor family. Alpha-KTx 03 subfamily. In terms of tissue distribution, expressed by the venom gland.

The protein resides in the secreted. In terms of biological role, blocks voltage-gated potassium channels. At 2 uM, blocks rat Kv1.1/KCNA1 and Kv1.3/KCNA3, has a strong effect on rat Kv1.2/KCNA2 and Kv1.6/KCNA6 as well as a moderate effect on Shaker IR. This is Potassium channel toxin alpha-KTx 3.6 from Olivierus martensii (Manchurian scorpion).